Reading from the N-terminus, the 239-residue chain is tRNA (guanine-N(7)-)-methyltransferase (239 aa).

S-adenosyl-L-methionine contacts are provided by glutamate 69, glutamate 94, aspartate 121, and aspartate 144. The active site involves aspartate 144. Substrate contacts are provided by residues lysine 148, aspartate 180, and 217–220; that span reads TKFE.

It belongs to the class I-like SAM-binding methyltransferase superfamily. TrmB family.

The enzyme catalyses guanosine(46) in tRNA + S-adenosyl-L-methionine = N(7)-methylguanosine(46) in tRNA + S-adenosyl-L-homocysteine. Its pathway is tRNA modification; N(7)-methylguanine-tRNA biosynthesis. In terms of biological role, catalyzes the formation of N(7)-methylguanine at position 46 (m7G46) in tRNA. In Pseudoalteromonas atlantica (strain T6c / ATCC BAA-1087), this protein is tRNA (guanine-N(7)-)-methyltransferase.